The sequence spans 570 residues: Glutamate--tRNA ligase (570 aa).

The short motif at Pro107–Ser117 is the 'HIGH' region element.

Belongs to the class-I aminoacyl-tRNA synthetase family. Glutamate--tRNA ligase type 2 subfamily.

The protein localises to the cytoplasm. It carries out the reaction tRNA(Glu) + L-glutamate + ATP = L-glutamyl-tRNA(Glu) + AMP + diphosphate. Its function is as follows. Catalyzes the attachment of glutamate to tRNA(Glu) in a two-step reaction: glutamate is first activated by ATP to form Glu-AMP and then transferred to the acceptor end of tRNA(Glu). This Pyrobaculum islandicum (strain DSM 4184 / JCM 9189 / GEO3) protein is Glutamate--tRNA ligase.